A 207-amino-acid chain; its full sequence is Enolase (207 aa).

Gln-162 provides a ligand contact to (2R)-2-phosphoglycerate. Glu-204 acts as the Proton donor in catalysis.

The protein belongs to the enolase family.

The protein localises to the cytoplasm. Its subcellular location is the secreted. The protein resides in the cell surface. It carries out the reaction (2R)-2-phosphoglycerate = phosphoenolpyruvate + H2O. It functions in the pathway carbohydrate degradation; glycolysis; pyruvate from D-glyceraldehyde 3-phosphate: step 4/5. Functionally, catalyzes the reversible conversion of 2-phosphoglycerate (2-PG) into phosphoenolpyruvate (PEP). It is essential for the degradation of carbohydrates via glycolysis. The protein is Enolase of Campylobacter fetus.